We begin with the raw amino-acid sequence, 221 residues long: Lipoprotein-releasing system ATP-binding protein LolD (221 aa).

In terms of domain architecture, ABC transporter spans Leu8–Ile220. Gly42–Ser49 is a binding site for ATP.

The protein belongs to the ABC transporter superfamily. Lipoprotein translocase (TC 3.A.1.125) family. In terms of assembly, the complex is composed of two ATP-binding proteins (LolD) and two transmembrane proteins (LolC and LolE).

It is found in the cell inner membrane. Part of the ABC transporter complex LolCDE involved in the translocation of mature outer membrane-directed lipoproteins, from the inner membrane to the periplasmic chaperone, LolA. Responsible for the formation of the LolA-lipoprotein complex in an ATP-dependent manner. The chain is Lipoprotein-releasing system ATP-binding protein LolD from Rickettsia prowazekii (strain Madrid E).